A 229-amino-acid polypeptide reads, in one-letter code: MKVGIVGAMAQEVEILASLIENKNVVHIAGCTIYQGNIQDKEVALLQSGIGKVAAAMGTTLLLQMFKPDIVINTGSAGGVSSGLKVGDVVVSTQTVYHDADVTAFGYAKGQLPACPPAFISDPKLTALVENVAEQQGINLTSGLICSGDSFINSAEKLAWIKANFPEVVAIEMEATAIAQVCHKFNIPFVVIRAISDVGDGEASISFEEFLPLAARQSSSMVLKILQSL.

Glu-12 (proton acceptor) is an active-site residue. Substrate-binding positions include Gly-78, Ile-152, and 173 to 174; that span reads ME. Residue Asp-197 is the Proton donor of the active site.

It belongs to the PNP/UDP phosphorylase family. MtnN subfamily.

The catalysed reaction is S-adenosyl-L-homocysteine + H2O = S-(5-deoxy-D-ribos-5-yl)-L-homocysteine + adenine. The enzyme catalyses S-methyl-5'-thioadenosine + H2O = 5-(methylsulfanyl)-D-ribose + adenine. It catalyses the reaction 5'-deoxyadenosine + H2O = 5-deoxy-D-ribose + adenine. Its pathway is amino-acid biosynthesis; L-methionine biosynthesis via salvage pathway; S-methyl-5-thio-alpha-D-ribose 1-phosphate from S-methyl-5'-thioadenosine (hydrolase route): step 1/2. Catalyzes the irreversible cleavage of the glycosidic bond in both 5'-methylthioadenosine (MTA) and S-adenosylhomocysteine (SAH/AdoHcy) to adenine and the corresponding thioribose, 5'-methylthioribose and S-ribosylhomocysteine, respectively. Also cleaves 5'-deoxyadenosine, a toxic by-product of radical S-adenosylmethionine (SAM) enzymes, into 5-deoxyribose and adenine. In Histophilus somni (strain 2336) (Haemophilus somnus), this protein is 5'-methylthioadenosine/S-adenosylhomocysteine nucleosidase.